The chain runs to 255 residues: MLEARLSQTLLLKKIVDALKEIIAQGTLDCSENGLELQSMDNSHVSLVALSLASDCFEKFHCDRNVSLGLDLKSLGKVLKCANSDDAVTIKAVDRPEKITLSFESDGKERTADYELKLLNLDQDHMEIPKKDYTCFIQLPSSEFARICRDMSMFDESLTIACSSKGIRFLAKGDLGTANIQLSAGTAMDVSIEVQEPVTQSFAGRYLNTFTKATPLADRVKLYLSDERPLLVEYPIEDYGHIRYYLAPKVNDPDF.

Residues 61 to 80 (HCDRNVSLGLDLKSLGKVLK) mediate DNA binding.

This sequence belongs to the PCNA family. Homotrimer. Interacts with the catalytic subunits of two DNA polymerase complexes: PolD1 in the delta complex and PolE1/DNApol-epsilon255 in the epsilon complex.

It is found in the nucleus. Its subcellular location is the chromosome. The protein resides in the cytoplasm. Its function is as follows. Likely to be an auxiliary protein of DNA polymerase delta complex and is probably involved in the control of DNA replication and repair by increasing the polymerase's processibility. May function independently of PCNA during DNA repair. This chain is Proliferating cell nuclear antigen 2, found in Drosophila melanogaster (Fruit fly).